We begin with the raw amino-acid sequence, 134 residues long: Terepressin/terephysin (134 aa).

The first 33 residues, 1-33 (MKCSVLPRSRLSWTMCVLLLPLLMLMLEGGVQG), serve as a signal peptide directing secretion. The cysteines at positions 34 and 39 are disulfide-linked. A propeptide spanning residues 44–50 (KRAVDSV) is cleaved from the precursor. 7 disulfide bridges follow: C56/C100, C59/C73, C67/C90, C74/C80, C107/C121, C115/C133, and C122/C127.

It belongs to the vasopressin/oxytocin family. Post-translationally, contains 7 disulfide bonds. In terms of tissue distribution, expressed by the venom duct.

It localises to the secreted. The protein is Terepressin/terephysin of Terebra subulata (Chocolate spotted auger).